A 988-amino-acid chain; its full sequence is Ephrin type-B receptor 3 (988 aa).

The disordered stretch occupies residues 1–24; the sequence is GVSSRARRPPGSSRSSRRGVTSEL. Over 1–534 the chain is Extracellular; sequence GVSSRARRPP…TSKTFQELPL (534 aa). Positions 11 to 189 constitute an Eph LBD domain; it reads GSSRSSRRGV…FYKKCSNTIA (179 aa). An intrachain disulfide couples C53 to C171. 2 consecutive Fibronectin type-III domains span residues 311-424 and 425-522; these read VPSA…TNQA and APSA…TAED. Residues N323 and N418 are each glycosylated (N-linked (GlcNAc...) asparagine). A helical membrane pass occupies residues 535–555; that stretch reads IVGSATAGLLFVIVVVIIAIV. At 556–988 the chain is on the cytoplasmic side; the sequence is CFRKGMVTEQ…QMNQTLPVQV (433 aa). Position 604 is a phosphotyrosine; by autocatalysis (Y604). In terms of domain architecture, Protein kinase spans 623-886; it reads VKIEEVIGAG…QIVNTLDKLI (264 aa). ATP contacts are provided by residues 629-637 and K655; that span reads IGAGEFGEV. The Proton acceptor role is filled by D748. The 65-residue stretch at 915–979 folds into the SAM domain; that stretch reads TTFTTVGDWL…LSSIQDMRLQ (65 aa). The short motif at 986–988 is the PDZ-binding element; the sequence is VQV.

It belongs to the protein kinase superfamily. Tyr protein kinase family. Ephrin receptor subfamily. Heterotetramer upon binding of the ligand. The heterotetramer is composed of an ephrin dimer and a receptor dimer. Oligomerization is probably required to induce biological responses. Phosphorylated. Autophosphorylates upon ligand-binding. Autophosphorylation on Tyr-604 is required for interaction with SH2 domain-containing proteins. Present in 10-day embryonic brain and body tissues. Prominent expression in kidney. Lower expression in lung, and barely detectable in brain, liver, heart, skeletal muscle and thymus.

The protein resides in the cell membrane. It localises to the cell projection. The protein localises to the dendrite. The catalysed reaction is L-tyrosyl-[protein] + ATP = O-phospho-L-tyrosyl-[protein] + ADP + H(+). Its function is as follows. Receptor tyrosine kinase which binds promiscuously transmembrane ephrin-B family ligands residing on adjacent cells, leading to contact-dependent bidirectional signaling into neighboring cells. The signaling pathway downstream of the receptor is referred to as forward signaling while the signaling pathway downstream of the ephrin ligand is referred to as reverse signaling. Generally has an overlapping and redundant function with EPHB2. Like EPHB2, functions in axon guidance during development. In addition to its role in axon guidance also plays an important redundant role with other ephrin-B receptors in development and maturation of dendritic spines and the formation of excitatory synapses. May control other aspects of development through regulation of cell migration and positioning. This chain is Ephrin type-B receptor 3 (EPHB3), found in Gallus gallus (Chicken).